Reading from the N-terminus, the 257-residue chain is Type III pantothenate kinase (257 aa).

6–13 (DVGNTSTK) lines the ATP pocket. 109-112 (GADR) contributes to the substrate binding site. Aspartate 111 functions as the Proton acceptor in the catalytic mechanism. A K(+)-binding site is contributed by aspartate 132. Threonine 135 contributes to the ATP binding site. Threonine 187 is a substrate binding site.

The protein belongs to the type III pantothenate kinase family. In terms of assembly, homodimer. Requires NH4(+) as cofactor. It depends on K(+) as a cofactor.

It is found in the cytoplasm. It catalyses the reaction (R)-pantothenate + ATP = (R)-4'-phosphopantothenate + ADP + H(+). Its pathway is cofactor biosynthesis; coenzyme A biosynthesis; CoA from (R)-pantothenate: step 1/5. Catalyzes the phosphorylation of pantothenate (Pan), the first step in CoA biosynthesis. This Anaplasma marginale (strain St. Maries) protein is Type III pantothenate kinase.